The chain runs to 263 residues: 5'-nucleotidase SurE (263 aa).

The a divalent metal cation site is built by Asp21, Asp22, Ser52, and Asn105.

The protein belongs to the SurE nucleotidase family. It depends on a divalent metal cation as a cofactor.

It is found in the cytoplasm. The catalysed reaction is a ribonucleoside 5'-phosphate + H2O = a ribonucleoside + phosphate. Nucleotidase that shows phosphatase activity on nucleoside 5'-monophosphates. The sequence is that of 5'-nucleotidase SurE from Vibrio cholerae serotype O1 (strain ATCC 39541 / Classical Ogawa 395 / O395).